The primary structure comprises 350 residues: Biotin synthase (350 aa).

Residues 54 to 278 (REIQLSTLLS…TMPQSYVRLS (225 aa)) form the Radical SAM core domain. 3 residues coordinate [4Fe-4S] cluster: cysteine 69, cysteine 73, and cysteine 76. [2Fe-2S] cluster contacts are provided by cysteine 113, cysteine 144, cysteine 204, and arginine 276.

Belongs to the radical SAM superfamily. Biotin synthase family. As to quaternary structure, homodimer. Requires [4Fe-4S] cluster as cofactor. It depends on [2Fe-2S] cluster as a cofactor.

It catalyses the reaction (4R,5S)-dethiobiotin + (sulfur carrier)-SH + 2 reduced [2Fe-2S]-[ferredoxin] + 2 S-adenosyl-L-methionine = (sulfur carrier)-H + biotin + 2 5'-deoxyadenosine + 2 L-methionine + 2 oxidized [2Fe-2S]-[ferredoxin]. It functions in the pathway cofactor biosynthesis; biotin biosynthesis; biotin from 7,8-diaminononanoate: step 2/2. In terms of biological role, catalyzes the conversion of dethiobiotin (DTB) to biotin by the insertion of a sulfur atom into dethiobiotin via a radical-based mechanism. In Neisseria gonorrhoeae (strain ATCC 700825 / FA 1090), this protein is Biotin synthase.